Here is a 540-residue protein sequence, read N- to C-terminus: Ubiquitin carboxyl-terminal hydrolase 17-like protein E (540 aa).

The segment at 1 to 22 (MVVSLSFPEETGGENLPSAPLE) is disordered. The USP domain occupies 85–382 (CGLQNTGNSC…NAYVLFYVQQ (298 aa)). Catalysis depends on Cys-94, which acts as the Nucleophile. His-341 (proton acceptor) is an active-site residue. Composition is skewed to basic and acidic residues over residues 431-441 (NREKRAKKETS) and 508-520 (APDKENQPWHNGD). Disordered regions lie at residues 431 to 461 (NREKRAKKETSLGEGKVPQEVNHEKAGQKHG) and 499 to 540 (RSTA…QGGR). The segment covering 523–540 (LTSQGLMSPGQLCSQGGR) has biased composition (polar residues).

This sequence belongs to the peptidase C19 family. USP17 subfamily. As to quaternary structure, interacts with SUDS3; the interaction is direct.

The protein localises to the nucleus. It is found in the endoplasmic reticulum. The catalysed reaction is Thiol-dependent hydrolysis of ester, thioester, amide, peptide and isopeptide bonds formed by the C-terminal Gly of ubiquitin (a 76-residue protein attached to proteins as an intracellular targeting signal).. Its function is as follows. Deubiquitinating enzyme that removes conjugated ubiquitin from specific proteins to regulate different cellular processes that may include cell proliferation, progression through the cell cycle, apoptosis, cell migration, and the cellular response to viral infection. This Mus musculus (Mouse) protein is Ubiquitin carboxyl-terminal hydrolase 17-like protein E (Usp17le).